Reading from the N-terminus, the 420-residue chain is UDP-N-acetylglucosamine 1-carboxyvinyltransferase (420 aa).

K23–N24 contributes to the phosphoenolpyruvate binding site. Position 92 (R92) interacts with UDP-N-acetyl-alpha-D-glucosamine. C116 serves as the catalytic Proton donor. A 2-(S-cysteinyl)pyruvic acid O-phosphothioketal modification is found at C116. UDP-N-acetyl-alpha-D-glucosamine contacts are provided by residues R121 to L125, K161 to V164, D306, and I328.

This sequence belongs to the EPSP synthase family. MurA subfamily.

The protein resides in the cytoplasm. The catalysed reaction is phosphoenolpyruvate + UDP-N-acetyl-alpha-D-glucosamine = UDP-N-acetyl-3-O-(1-carboxyvinyl)-alpha-D-glucosamine + phosphate. Its pathway is cell wall biogenesis; peptidoglycan biosynthesis. In terms of biological role, cell wall formation. Adds enolpyruvyl to UDP-N-acetylglucosamine. This Photobacterium profundum (strain SS9) protein is UDP-N-acetylglucosamine 1-carboxyvinyltransferase.